Consider the following 290-residue polypeptide: Beta-lactamase OXY-2 (290 aa).

A signal peptide spans 1 to 27 (MIKSSWRKIAMLAAAVPLLLASGALWA). Ser72 (acyl-ester intermediate) is an active-site residue. 236-238 (KTG) lines the substrate pocket.

This sequence belongs to the class-A beta-lactamase family.

The enzyme catalyses a beta-lactam + H2O = a substituted beta-amino acid. Functionally, hydrolyzes broad-spectrum beta-lactam antibiotics. Active against all third-generation cephalosporins but ceftazidime. This Klebsiella oxytoca protein is Beta-lactamase OXY-2 (bla).